We begin with the raw amino-acid sequence, 73 residues long: Cell division protein ZapB (73 aa).

Positions 3 to 67 form a coiled coil; it reads LELLSKLETK…WNDKVTGLVG (65 aa).

The protein belongs to the ZapB family. As to quaternary structure, homodimer. The ends of the coiled-coil dimer bind to each other, forming polymers. Interacts with FtsZ.

It localises to the cytoplasm. Its function is as follows. Non-essential, abundant cell division factor that is required for proper Z-ring formation. It is recruited early to the divisome by direct interaction with FtsZ, stimulating Z-ring assembly and thereby promoting cell division earlier in the cell cycle. Its recruitment to the Z-ring requires functional FtsA or ZipA. This chain is Cell division protein ZapB, found in Shewanella sp. (strain MR-4).